Here is a 408-residue protein sequence, read N- to C-terminus: Imidazolonepropionase (408 aa).

Positions 74 and 76 each coordinate Fe(3+). The Zn(2+) site is built by His74 and His76. 4-imidazolone-5-propanoate contacts are provided by Arg83, Tyr146, and His179. Residue Tyr146 participates in N-formimidoyl-L-glutamate binding. His244 lines the Fe(3+) pocket. His244 provides a ligand contact to Zn(2+). Gln247 lines the 4-imidazolone-5-propanoate pocket. Asp319 contributes to the Fe(3+) binding site. A Zn(2+)-binding site is contributed by Asp319. Residues Asn321 and Gly323 each contribute to the N-formimidoyl-L-glutamate site. Thr324 provides a ligand contact to 4-imidazolone-5-propanoate.

It belongs to the metallo-dependent hydrolases superfamily. HutI family. Requires Zn(2+) as cofactor. The cofactor is Fe(3+).

The protein localises to the cytoplasm. The enzyme catalyses 4-imidazolone-5-propanoate + H2O = N-formimidoyl-L-glutamate. Its pathway is amino-acid degradation; L-histidine degradation into L-glutamate; N-formimidoyl-L-glutamate from L-histidine: step 3/3. Catalyzes the hydrolytic cleavage of the carbon-nitrogen bond in imidazolone-5-propanoate to yield N-formimidoyl-L-glutamate. It is the third step in the universal histidine degradation pathway. The chain is Imidazolonepropionase from Ralstonia nicotianae (strain ATCC BAA-1114 / GMI1000) (Ralstonia solanacearum).